Consider the following 1225-residue polypeptide: MVDVNRFKSMQITLASPSKVRSWSYGEVKKPETINYRTLKPEREGLFDEVIFGPTKDWECACGKYKRIRYRGIVCDRCGVEVTRTKVRRERMGHIELKAPVSHIWYFKGIPSRMGLTLDMSPRALEEVIYFAAYVVIDPKDTPLEHKSIMTEREYRERLREYGYGSFVAKMGAEAIQDLLKQVDLEKEIAELKEELKTATGQKRVKAIRRLDVLDAFYKSGNKPEWMILNILPVIPPDLRPMLQLDGGRFASSDLNDLYRRVINRNNRLARLLELNAPGIIVQNEKRMLQEAVDALIDNGRRGRPITGPGSRPLKSLSHMLKGKQGRFRQNLLGKRVDFSGRSVIAVGPTLKMYQCGVPREMAIELFKPFVMREIVARDIVQNVKAAKRLVERGDERIWDILEEVIKEHPVLLNRAPTLHRLGIQAFEPVLIDGKALRLHPLVCEAYNADFDGDQMAIHVPLSEEAQAEARILMLAAEHILNPKDGKPVVTPSQDMVLGNYYLTMEEAGREGEGMVFKDRDEAVMAYRNGYVHLHSRVGIATDSLNKPWTEEQRHKVLLTTVGKILFNDIMPEGLPYLQEPNNANLTEGVPAKYFLPLGGDIKEAISNLELNPPFKKKNLGNIIAEIFKRFRTTETSALLDRMKNLGYHHSTLAGLTVGIADIPVVDDKTEIIEESHKRVEQITKQFRRGMITDDERYNAVTAEWRAAREKLEKRLIANQDPKNPIVMMMDSGARGNISNFSQLAGMRGLMAAPNGRIMELPILSNFREGLSVLEMFFSTHGARKGMTDTALKTADSGYLTRRLVDVAQDVIIREDDCGTDRGLLIRSIAEGKEMIESLEERLNGRYTKKTVKHPETGAVIIGPNELITEDKAREIVNAGVEEVTIRSVFTCNTRHGVCRHCYGINLATGDAVEVGEAVGTIAAQSIGEPGTQLTMRTFHTGGVASNTDITQGLPRVQEIFEARNPKGEAVITEVKGQVTAIEEDASTRTKKVFVKGETGEGEYVVPFTARMRVEVGGQVARGAALTEGSIQPKRLLAVRDVLSVETYLLGEVQKVYRSQGVEIGDKHIEVMVRQMIRKVRVMDPGDTDLLMGTLMDINDFTDANKDVLIAGGVPATGRPVLMGITKASLETNSFLSAASFQETTRVLTDAAIRGKKDHLLGLKENVIIGKIIPAGTGMARYRNLEPYAVNEEEYLNPPVEEEGNEETTEVVVDTAVETVEETVE.

Zn(2+) contacts are provided by Cys60, Cys62, Cys75, and Cys78. Residues Asp450, Asp452, and Asp454 each coordinate Mg(2+). 4 residues coordinate Zn(2+): Cys818, Cys892, Cys899, and Cys902.

The protein belongs to the RNA polymerase beta' chain family. As to quaternary structure, the RNAP catalytic core consists of 2 alpha, 1 beta, 1 beta' and 1 omega subunit. When a sigma factor is associated with the core the holoenzyme is formed, which can initiate transcription. It depends on Mg(2+) as a cofactor. Zn(2+) is required as a cofactor.

It carries out the reaction RNA(n) + a ribonucleoside 5'-triphosphate = RNA(n+1) + diphosphate. DNA-dependent RNA polymerase catalyzes the transcription of DNA into RNA using the four ribonucleoside triphosphates as substrates. The polypeptide is DNA-directed RNA polymerase subunit beta' (Streptococcus pneumoniae (strain P1031)).